A 102-amino-acid chain; its full sequence is Small ribosomal subunit protein uS10 (102 aa).

It belongs to the universal ribosomal protein uS10 family. Part of the 30S ribosomal subunit.

In terms of biological role, involved in the binding of tRNA to the ribosomes. This Pediococcus pentosaceus (strain ATCC 25745 / CCUG 21536 / LMG 10740 / 183-1w) protein is Small ribosomal subunit protein uS10.